Here is a 1052-residue protein sequence, read N- to C-terminus: MNHVINFVLKNKFAVWLMTIIVTAAGLYAGMNMKQESIPDVNMPYLTISTTYPGATPSQVADEVTKPVEQAVQNLDGVSVVTSTSYENASSVMIEYDYEKDMDKAKTEAAEALENVNLPDDAKDPEISRYSLNSFPILTLSVSSDKDNLQELTKQVEDSLVSKLEGIEGVASVQVSGQQVEEVEFSFKEDKLKEYGLDEDTVKQVIQGSDVTTPLGLYTFGNEEKSVVVSGDIETIKDLKNMRIPTASASSAGSSAASQAGAQSAQAAQSAQAAAQVQQSASTAVPTVKLSDIATIKDVKKAESVSRTNGKDSIGINIVKANDANTVEVADDVKAELKKFKEDHKGFNYSATLDMAEPITQSVDTMLSKAIFGAIFAIVIILLFLRDIKSTLISVVSIPLSLLIALLVLQQLDITLNIMTLGAMTVAIGRVVDDSIVVIENIYRRMRLKDEPLRGKALVREATKEMFKPIMSSTIVTIAVFLPLALVGGQIGELFIPFALTIVFALAASLVISITLVPMLAHSLFKKSLTGAPIKAKEHKPGRLANIYKKVLNWALSHKWITSIIAVLMLLGSLFLVPLIGASYLPSEEEKTMQLTYSPEPGETKKEAENEAEKAEKILLDRKHVDTVQYSLGSGSPLAGGDSNGALFYIKYESDTPDFDKEKDNVLKEIQKQSDRGEWKSQDFSSSGNNNELTYYVYGDSENDIKDTVKDIEKIMKDEKDLKNVNSGLSSTYDEYTFVADQEKLSKLGLTASQISQALMSQTSQEPLTTVKKDGKELDVNIKTEKDEYKSVKDLENKKITSATGQEVKIGDVAKVKEGSTSDTVSKRDGKVYADVTGEVTSDNVTAVSAAIQKKIDKLDHPDNVSIDTGGVSADIADSFTKLGLAMLAAIAIVYLVLVITFGGALAPFAILFSLPFTVIGALVGLYVSGETISLNAMIGMLMLIGIVVTNAIVLIDRVIHKEAEGLSTREALLEAGSTRLRPILMTAIATIGALIPLALGFEGGSQVISKGLGVTVIGGLISSTLLTLLIVPIVYEVLAKFRKKKPGTEEE.

It belongs to the resistance-nodulation-cell division (RND) (TC 2.A.6) family.

In terms of biological role, required for self-resistance to surfactin, an antimicrobial lipopeptide surfactant produced by B.subtilis. Also required for swarming motility. In Bacillus subtilis (strain 168), this protein is Swarming motility protein SwrC (swrC).